We begin with the raw amino-acid sequence, 98 residues long: uncharacterized protein (98 aa).

The N-terminal stretch at 1 to 23 is a signal peptide; sequence MKYVALAFVLSLVILQISAQVGA.

In terms of tissue distribution, nacreous layer of shell (at protein level). Expressed primarily in the mantle with highest level in the mantle pallium and lower level in the mantle edge.

It localises to the secreted. This is an uncharacterized protein from Pinctada maxima (Silver-lipped pearl oyster).